We begin with the raw amino-acid sequence, 651 residues long: Cytoplasmic tyrosine-protein kinase BMX (651 aa).

Residues 4-111 form the PH domain; it reads KSILEELLLK…WLKALQKEIR (108 aa). The segment at 113 to 149 adopts a Btk-type zinc-finger fold; it reads NPHLLIKYHSGFFVDGKFLCCQQSCKAAPGCTLWEAY. Zn(2+)-binding residues include His-121, Cys-132, Cys-133, and Cys-143. The SH2 domain occupies 272-368; it reads WFAGNISRSQ…GMITRLRHPV (97 aa). The region spanning 393-646 is the Protein kinase domain; it reads ITLLKELGNG…QLLSAIEPLR (254 aa). Residues 399-407 and Lys-421 each bind ATP; that span reads LGNGQFGVV. Catalysis depends on Asp-512, which acts as the Proton acceptor. Residue Tyr-542 is modified to Phosphotyrosine; by SRC and autocatalysis.

This sequence belongs to the protein kinase superfamily. Tyr protein kinase family. TEC subfamily. Interacts with BCAR1, CAV1, MYD88, PTK2/FAK1, RUFY1, RUFY2, STAT3, TIRAP and TNFRSF1B. Zn(2+) serves as cofactor. Phosphorylated in response to protein I/II and to LPS. Phosphorylation at Tyr-542 by SRC and by autocatalysis leads to activation and is required for STAT3 phosphorylation by BMX. In terms of tissue distribution, specifically expressed in the endocardium of the developing heart as well as in the endocardium of the left ventricle and in the endothelium of large arteries in adult mice.

It is found in the cytoplasm. The enzyme catalyses L-tyrosyl-[protein] + ATP = O-phospho-L-tyrosyl-[protein] + ADP + H(+). TEK and vascular endothelial growth factor receptor 1 (FLT1) stimulate BMX tyrosine kinase activity. Activated by integrins through the mediation of PTK2/FAK1. Activated by TNF through the mediation of TNFRSF1B. In terms of biological role, non-receptor tyrosine kinase that plays central but diverse modulatory roles in various signaling processes involved in the regulation of actin reorganization, cell migration, cell proliferation and survival, cell adhesion, and apoptosis. Participates in signal transduction stimulated by growth factor receptors, cytokine receptors, G-protein coupled receptors, antigen receptors and integrins. Induces tyrosine phosphorylation of BCAR1 in response to integrin regulation. Activation of BMX by integrins is mediated by PTK2/FAK1, a key mediator of integrin signaling events leading to the regulation of actin cytoskeleton and cell motility. Plays a critical role in TNF-induced angiogenesis, and implicated in the signaling of TEK and FLT1 receptors, 2 important receptor families essential for angiogenesis. Required for the phosphorylation and activation of STAT3, a transcription factor involved in cell differentiation. Also involved in interleukin-6 (IL6) induced differentiation. Also plays a role in programming adaptive cytoprotection against extracellular stress in different cell systems, salivary epithelial cells, brain endothelial cells, and dermal fibroblasts. May be involved in regulation of endocytosis through its interaction with an endosomal protein RUFY1. May also play a role in the growth and differentiation of hematopoietic cells; as well as in signal transduction in endocardial and arterial endothelial cells. The protein is Cytoplasmic tyrosine-protein kinase BMX (Bmx) of Mus musculus (Mouse).